Here is a 169-residue protein sequence, read N- to C-terminus: Cell division inhibitor SulA (169 aa).

Over residues 1–15 the composition is skewed to polar residues; it reads MFTSAHANRSAQASA. The tract at residues 1–22 is disordered; it reads MFTSAHANRSAQASASAGHYAH. A ftsZ binding region spans residues 106 to 112; the sequence is ALRTGNY. The tract at residues 162–169 is lon protease binding; it reads KIHSNLYH.

This sequence belongs to the SulA family. As to quaternary structure, interacts with FtsZ. In terms of processing, is rapidly cleaved and degraded by the Lon protease once DNA damage is repaired.

Component of the SOS system and an inhibitor of cell division. Accumulation of SulA causes rapid cessation of cell division and the appearance of long, non-septate filaments. In the presence of GTP, binds a polymerization-competent form of FtsZ in a 1:1 ratio, thus inhibiting FtsZ polymerization and therefore preventing it from participating in the assembly of the Z ring. This mechanism prevents the premature segregation of damaged DNA to daughter cells during cell division. This Klebsiella pneumoniae (strain 342) protein is Cell division inhibitor SulA.